Consider the following 424-residue polypeptide: Adenylosuccinate synthetase (424 aa).

GTP-binding positions include 12 to 18 and 40 to 42; these read GDEGKGK and GHT. Asp13 (proton acceptor) is an active-site residue. Residues Asp13 and Gly40 each coordinate Mg(2+). Residues 13–16, 38–41, Thr130, Arg144, Asn220, Thr235, and Arg299 each bind IMP; these read DEGK and NAGH. Residue His41 is the Proton donor of the active site. 295–301 lines the substrate pocket; that stretch reads VTTGRRR. Residues Arg301, 327-329, and 412-414 each bind GTP; these read KLD and GTG.

It belongs to the adenylosuccinate synthetase family. Homodimer. Requires Mg(2+) as cofactor.

Its subcellular location is the cytoplasm. It carries out the reaction IMP + L-aspartate + GTP = N(6)-(1,2-dicarboxyethyl)-AMP + GDP + phosphate + 2 H(+). It participates in purine metabolism; AMP biosynthesis via de novo pathway; AMP from IMP: step 1/2. Functionally, plays an important role in the de novo pathway and in the salvage pathway of purine nucleotide biosynthesis. Catalyzes the first committed step in the biosynthesis of AMP from IMP. The sequence is that of Adenylosuccinate synthetase from Aspergillus niger (strain ATCC MYA-4892 / CBS 513.88 / FGSC A1513).